A 175-amino-acid polypeptide reads, in one-letter code: Coagulogen (175 aa).

Disulfide bonds link cysteine 8–cysteine 167, cysteine 10–cysteine 95, cysteine 60–cysteine 161, cysteine 65–cysteine 121, cysteine 75–cysteine 168, cysteine 88–cysteine 140, cysteine 127–cysteine 170, and cysteine 134–cysteine 172.

The protein belongs to the coagulin family. As to quaternary structure, coagulogen is cleaved after Arg-18 and Arg-46 by a clotting enzyme contained in the hemocyte and activated by a bacterial endotoxin (lipopolysaccharide). This cleavage releases the peptide C and leaves 2 chains of coagulin, A and B, linked by two disulfide bonds. Coagulin molecules interlink to form a gel. Hemolymph.

The protein localises to the secreted. In terms of biological role, coagulogen is a gel-forming protein of hemolymph; it hinders the spread of invaders by immobilizing them. The protein is Coagulogen of Carcinoscorpius rotundicauda (Mangrove horseshoe crab).